Here is an 82-residue protein sequence, read N- to C-terminus: Toxin GTx1-15 (82 aa).

An N-terminal signal peptide occupies residues Met-1 to Ala-21. A propeptide spanning residues Ser-22 to Arg-46 is cleaved from the precursor. 3 disulfide bridges follow: Cys-48–Cys-63, Cys-55–Cys-69, and Cys-62–Cys-76. Phe-80 carries the post-translational modification Phenylalanine amide.

Belongs to the neurotoxin 10 (Hwtx-1) family. 08 (Gtx1-15) subfamily. As to expression, expressed by the venom gland.

The protein resides in the secreted. In terms of biological role, potent voltage-gated sodium channel blocker. Potently inhibits the voltage-gated sodium channels Nav1.7/SCN9A (IC(50)=0.58-10 nM). Shows a moderate activity on Nav1.1/SCN1A (IC(50)=6 nM), Nav1.2/SCN2A (IC(50)=5-128 nM), Nav1.3/SCN3A (IC(50)=20.3-170 nM), and Nav1.6/SCN8A (IC(50)=17-20.1 nM). Shows an unclear inhibition of Nav1.4/SCN4A (IC(50)=200 nM to &gt;10 uM), Nav1.5/SCN5A (IC(50)=140 nM to &gt;10 uM) and Nav1.8/SCN10A (IC(50)=68-12200 nM). Weakly blocks the low voltage-gated calcium channels Cav3.1/CACNA1G (30% inhibition of the peak current by 9.8 nM of the toxin). It shows moderate affinity for lipid bilayers. The polypeptide is Toxin GTx1-15 (Grammostola rosea (Chilean rose tarantula)).